The following is a 90-amino-acid chain: Barrier-to-autointegration factor B (90 aa).

Belongs to the BAF family. Homodimer. Interacts with nemp1a and nemp1b.

It localises to the nucleus. Its subcellular location is the chromosome. The protein localises to the nucleus envelope. It is found in the cytoplasm. Its function is as follows. Non-specific DNA-binding protein that plays key roles in mitotic nuclear reassembly, chromatin organization, DNA damage response, gene expression and intrinsic immunity against foreign DNA. Contains two non-specific double-stranded DNA (dsDNA)-binding sites which promote DNA cross-bridging. Plays a key role in nuclear membrane reformation at the end of mitosis by driving formation of a single nucleus in a spindle-independent manner. Transiently cross-bridges anaphase chromosomes via its ability to bridge distant DNA sites, leading to the formation of a dense chromatin network at the chromosome ensemble surface that limits membranes to the surface. Also acts as a negative regulator of innate immune activation by restricting CGAS activity toward self-DNA upon acute loss of nuclear membrane integrity. Outcompetes CGAS for DNA-binding, thereby preventing CGAS activation and subsequent damaging autoinflammatory responses. Also involved in DNA damage response; acts by inhibiting the ADP-ribosyltransferase activity of PARP1. Involved in the recognition of exogenous dsDNA in the cytosol: associates with exogenous dsDNA immediately after its appearance in the cytosol at endosome breakdown and is required to avoid autophagy. In Xenopus laevis (African clawed frog), this protein is Barrier-to-autointegration factor B (banf1-b).